The following is a 468-amino-acid chain: Chromosomal replication initiator protein DnaA (468 aa).

The interval 1-84 (MSSSLWLQCM…RFEVGSRPVA (84 aa)) is domain I, interacts with DnaA modulators. The tract at residues 81-113 (RPVAAPKPAPTRTPADVAAESSAPAQLQARKPV) is disordered. The domain II stretch occupies residues 84–131 (AAPKPAPTRTPADVAAESSAPAQLQARKPVHKTWDDDAQAIADINHRS). The tract at residues 132 to 348 (NVNPKHKFNN…GALNRVIANA (217 aa)) is domain III, AAA+ region. The ATP site is built by glycine 176, glycine 178, lysine 179, and threonine 180. Positions 349-468 (NFTGRPITID…YSNLIRTLSS (120 aa)) are domain IV, binds dsDNA.

The protein belongs to the DnaA family. Oligomerizes as a right-handed, spiral filament on DNA at oriC.

It is found in the cytoplasm. Functionally, plays an essential role in the initiation and regulation of chromosomal replication. ATP-DnaA binds to the origin of replication (oriC) to initiate formation of the DNA replication initiation complex once per cell cycle. Binds the DnaA box (a 9 base pair repeat at the origin) and separates the double-stranded (ds)DNA. Forms a right-handed helical filament on oriC DNA; dsDNA binds to the exterior of the filament while single-stranded (ss)DNA is stabiized in the filament's interior. The ATP-DnaA-oriC complex binds and stabilizes one strand of the AT-rich DNA unwinding element (DUE), permitting loading of DNA polymerase. After initiation quickly degrades to an ADP-DnaA complex that is not apt for DNA replication. Binds acidic phospholipids. This Vibrio vulnificus (strain CMCP6) protein is Chromosomal replication initiator protein DnaA.